We begin with the raw amino-acid sequence, 218 residues long: 3-oxo-tetronate 4-phosphate decarboxylase (218 aa).

The Proton acceptor role is filled by glutamate 86. 3 residues coordinate Zn(2+): glutamate 86, histidine 105, and histidine 107. Tyrosine 132 serves as the catalytic Proton donor. Residue histidine 172 coordinates Zn(2+).

The protein belongs to the aldolase class II family. AraD/FucA subfamily. Zn(2+) is required as a cofactor.

It carries out the reaction 3-dehydro-4-O-phospho-D-erythronate + H(+) = dihydroxyacetone phosphate + CO2. The enzyme catalyses 3-dehydro-4-O-phospho-L-erythronate + H(+) = dihydroxyacetone phosphate + CO2. In terms of biological role, catalyzes the decarboxylation of 3-oxo-tetronate 4-phosphate to dihydroxyacetone phosphate (DHAP) and CO(2). The protein is 3-oxo-tetronate 4-phosphate decarboxylase of Pectobacterium atrosepticum (strain SCRI 1043 / ATCC BAA-672) (Erwinia carotovora subsp. atroseptica).